We begin with the raw amino-acid sequence, 644 residues long: DNA gyrase subunit B (644 aa).

The 115-residue stretch at 429–543 (CEIFLVEGDS…AGYVYIAQPP (115 aa)) folds into the Toprim domain. Mg(2+) is bound by residues Glu435, Asp508, and Asp510.

It belongs to the type II topoisomerase GyrB family. In terms of assembly, heterotetramer, composed of two GyrA and two GyrB chains. In the heterotetramer, GyrA contains the active site tyrosine that forms a transient covalent intermediate with DNA, while GyrB binds cofactors and catalyzes ATP hydrolysis. Requires Mg(2+) as cofactor. The cofactor is Mn(2+). Ca(2+) serves as cofactor.

The protein resides in the cytoplasm. The catalysed reaction is ATP-dependent breakage, passage and rejoining of double-stranded DNA.. Functionally, a type II topoisomerase that negatively supercoils closed circular double-stranded (ds) DNA in an ATP-dependent manner to modulate DNA topology and maintain chromosomes in an underwound state. Negative supercoiling favors strand separation, and DNA replication, transcription, recombination and repair, all of which involve strand separation. Also able to catalyze the interconversion of other topological isomers of dsDNA rings, including catenanes and knotted rings. Type II topoisomerases break and join 2 DNA strands simultaneously in an ATP-dependent manner. This is DNA gyrase subunit B from Staphylococcus aureus (strain MRSA252).